The sequence spans 165 residues: MSHIFDASVLAPHIPSNLPDNFKVRPLAKDDFSKGYVDLLSQLTSVGNLDQEAFEKRFEAMRTSVPNYHIVVIEDSNSQKVVASASLVVEMKFIHGAGSRGRVEDVVVDTEMRRQKLGAVLLKTLVSLGKSLGVYKISLECVPELLPFYSQFGFQDDCNFMTQRF.

The N-acetyltransferase domain maps to 22-165 (FKVRPLAKDD…DDCNFMTQRF (144 aa)). Residues threonine 44, 92–95 (KFIH), and 104–106 (EDV) each bind substrate. Residue 114 to 119 (RQKLGA) coordinates acetyl-CoA. Substrate is bound by residues 135-136 (YK) and arginine 164.

The protein belongs to the acetyltransferase family. GNA1 subfamily.

It carries out the reaction D-glucosamine 6-phosphate + acetyl-CoA = N-acetyl-D-glucosamine 6-phosphate + CoA + H(+). It functions in the pathway nucleotide-sugar biosynthesis; UDP-N-acetyl-alpha-D-glucosamine biosynthesis; N-acetyl-alpha-D-glucosamine 1-phosphate from alpha-D-glucosamine 6-phosphate (route I): step 1/2. This is Glucosamine 6-phosphate N-acetyltransferase (gna-1) from Caenorhabditis elegans.